Reading from the N-terminus, the 313-residue chain is Formimidoylglutamase (313 aa).

Residues His-130, Asp-155, His-157, Asp-159, Asp-241, and Asp-243 each contribute to the Mn(2+) site.

It belongs to the arginase family. The cofactor is Mn(2+).

It carries out the reaction N-formimidoyl-L-glutamate + H2O = formamide + L-glutamate. The protein operates within amino-acid degradation; L-histidine degradation into L-glutamate; L-glutamate from N-formimidoyl-L-glutamate (hydrolase route): step 1/1. Functionally, catalyzes the conversion of N-formimidoyl-L-glutamate to L-glutamate and formamide. The chain is Formimidoylglutamase from Salmonella paratyphi B (strain ATCC BAA-1250 / SPB7).